We begin with the raw amino-acid sequence, 207 residues long: Guanylate kinase (207 aa).

The Guanylate kinase-like domain maps to 4–184 (GTLYIVSAPS…ALLDLKTIIR (181 aa)). 11–18 (APSGAGKS) contributes to the ATP binding site.

Belongs to the guanylate kinase family.

The protein localises to the cytoplasm. It catalyses the reaction GMP + ATP = GDP + ADP. Its function is as follows. Essential for recycling GMP and indirectly, cGMP. In Sodalis glossinidius (strain morsitans), this protein is Guanylate kinase.